A 518-amino-acid chain; its full sequence is Serine hydroxymethyltransferase, mitochondrial (518 aa).

The N-terminal 31 residues, 1–31 (MAMAMALRKLSSSVNKSSRPLFSASSLYYKS), are a transit peptide targeting the mitochondrion. Lys-287 bears the N6-(pyridoxal phosphate)lysine mark.

The protein belongs to the SHMT family. As to quaternary structure, homotetramer. Pyridoxal 5'-phosphate is required as a cofactor.

The protein resides in the mitochondrion. It carries out the reaction (6R)-5,10-methylene-5,6,7,8-tetrahydrofolate + glycine + H2O = (6S)-5,6,7,8-tetrahydrofolate + L-serine. Its pathway is one-carbon metabolism; tetrahydrofolate interconversion. Its function is as follows. Catalyzes the interconversion of serine and glycine. This Pisum sativum (Garden pea) protein is Serine hydroxymethyltransferase, mitochondrial.